Here is a 243-residue protein sequence, read N- to C-terminus: Probable 2-phosphosulfolactate phosphatase (243 aa).

It belongs to the ComB family. Mg(2+) serves as cofactor.

The catalysed reaction is (2R)-O-phospho-3-sulfolactate + H2O = (2R)-3-sulfolactate + phosphate. The chain is Probable 2-phosphosulfolactate phosphatase from Prochlorococcus marinus (strain MIT 9303).